A 4128-amino-acid polypeptide reads, in one-letter code: DNA-dependent protein kinase catalytic subunit (4128 aa).

K117 carries the N6-acetyllysine modification. The stretch at D288–I323 is one HEAT 1 repeat. 4 positions are modified to phosphoserine: S511, S686, S840, and S891. 2 HEAT repeats span residues Q1001–S1037 and P1050–F1086. At S1062 the chain carries Phosphoserine. K1206 carries the post-translational modification N6-acetyllysine. The interval L1501 to L1536 is interaction with C1D. Residues L1501–L1536 are leucine-zipper. Residues P1720–P1753 form a TPR 1 repeat. Residue K1967 is modified to N6-acetyllysine. The segment at Y2049 to S2071 is disordered. At S2053 the chain carries Phosphoserine; by autocatalysis. Residues Q2054 to D2070 are compositionally biased toward basic and acidic residues. K2255 carries the post-translational modification N6-acetyllysine. The segment at L2432 to E3213 is KIP-binding. Phosphothreonine is present on T2531. T2605 carries the post-translational modification Phosphothreonine; by autocatalysis. S2608 carries the post-translational modification Phosphoserine; by autocatalysis. The segment at T2614–Q2635 is disordered. 2 positions are modified to phosphothreonine; by autocatalysis: T2634 and T2643. The interval E2738–Q2766 is may split the end of the DNA molecule, with the two strands separating around the region. One can recognise an FAT domain in the interval P2907 to S3539. TPR repeat units lie at residues V2921–T2954 and N2956–V2983. S3206 carries the phosphoserine modification. N6-acetyllysine occurs at positions 3241, 3260, 3638, and 3642. Positions F3722–G4053 constitute a PI3K/PI4K catalytic domain. A G-loop region spans residues V3728 to K3734. Phosphoserine occurs at positions 3731 and 3821. The interval G3919 to N3927 is catalytic loop. An activation loop region spans residues G3939–T3964. Position 4026 is a phosphoserine (S4026). The FATC domain occupies S4096 to M4128.

Belongs to the PI3/PI4-kinase family. As to quaternary structure, DNA-PK is a heterotrimer of PRKDC and the Ku dimer (composed of XRCC6/Ku70 and XRCC5/Ku86). Formation of this complex may be promoted by interaction with ILF3. Component of the core long-range non-homologous end joining (NHEJ) complex (also named DNA-PK complex) composed of PRKDC, LIG4, XRCC4, XRCC6/Ku70, XRCC5/Ku86 and NHEJ1/XLF. Additional component of the NHEJ complex includes PAXX. Following autophosphorylation, PRKDC dissociates from DNA. Interacts with DNA-PKcs-interacting protein (KIP) with the region upstream the kinase domain. PRKDC alone also interacts with and phosphorylates DCLRE1C, thereby activating the latent endonuclease activity of this protein. Interacts with C1D. Interacts with TTI1 and TELO2. Interacts with CIB1. Interacts with SETX. Interacts with NR4A3; the DNA-dependent protein kinase complex DNA-PK phosphorylates and activates NR4A3 and prevents NR4A3 ubiquitination and degradation. Interacts with BRAT1. Part of the HDP-RNP complex composed of at least HEXIM1, PRKDC, XRCC5, XRCC6, paraspeckle proteins (SFPQ, NONO, PSPC1, RBM14, and MATR3) and NEAT1 RNA. Interacts with KAT5. Autophosphorylated at two clusters, the T2609 cluster and the S2056 cluster. Autophosphorylated on Ser-2053, Thr-2605, Thr-2634 and Thr-2643. Ser-2053 and Thr-2605 are DNA damage-inducible phosphorylation sites (inducible with ionizing radiation, IR) dephosphorylated by PPP5C. Autophosphorylation induces a conformational change that leads to remodeling of the DNA-PK complex, requisite for efficient end processing and DNA repair. Autophosphorylation in trans within DNA-PK complexes loaded on DNA ends leads to the dissociation of PRKDC from DNA and the transition into the short-range NHEJ complex. Autophosphorylation of the T2609 cluster is required for hematopoietic development and protein synthesis in erythrocytes precursors. In terms of processing, S-nitrosylated by GAPDH. Post-translationally, polyubiquitinated by RNF144A, leading to proteasomal degradation.

Its subcellular location is the nucleus. The protein localises to the nucleolus. The protein resides in the cytoplasm. It is found in the cytosol. The enzyme catalyses L-seryl-[protein] + ATP = O-phospho-L-seryl-[protein] + ADP + H(+). The catalysed reaction is L-threonyl-[protein] + ATP = O-phospho-L-threonyl-[protein] + ADP + H(+). Its activity is regulated as follows. Activity seems to be attenuated by autophosphorylation. Binding to the SL1 region of U3 small nucleolar RNA promotes auto-phosphorylation activity. Inhibited by wortmannin. Functionally, serine/threonine-protein kinase that acts as a molecular sensor for DNA damage. Involved in DNA non-homologous end joining (NHEJ) required for double-strand break (DSB) repair and V(D)J recombination. Must be bound to DNA to express its catalytic properties. Promotes processing of hairpin DNA structures in V(D)J recombination by activation of the hairpin endonuclease artemis (DCLRE1C). Recruited by XRCC5 and XRCC6 to DNA ends and is required to (1) protect and align broken ends of DNA, thereby preventing their degradation, (2) and sequester the DSB for repair by NHEJ. Acts as a scaffold protein to aid the localization of DNA repair proteins to the site of damage. The assembly of the DNA-PK complex at DNA ends is also required for the NHEJ ligation step. Found at the ends of chromosomes, suggesting a further role in the maintenance of telomeric stability and the prevention of chromosomal end fusion. Also involved in modulation of transcription. As part of the DNA-PK complex, involved in the early steps of ribosome assembly by promoting the processing of precursor rRNA into mature 18S rRNA in the small-subunit processome. Binding to U3 small nucleolar RNA, recruits PRKDC and XRCC5/Ku86 to the small-subunit processome. Recognizes the substrate consensus sequence [ST]-Q. Phosphorylates 'Ser-139' of histone variant H2AX, thereby regulating DNA damage response mechanism. Phosphorylates ASF1A, DCLRE1C, c-Abl/ABL1, histone H1, HSPCA, c-jun/JUN, p53/TP53, PARP1, POU2F1, DHX9, FH, SRF, NHEJ1/XLF, XRCC1, XRCC4, XRCC5, XRCC6, WRN, MYC and RFA2. Can phosphorylate C1D not only in the presence of linear DNA but also in the presence of supercoiled DNA. Ability to phosphorylate p53/TP53 in the presence of supercoiled DNA is dependent on C1D. Acts as a regulator of the phosphatidylinositol 3-kinase/protein kinase B signal transduction by mediating phosphorylation of 'Ser-473' of protein kinase B (PKB/AKT1, PKB/AKT2, PKB/AKT3), promoting their activation. Contributes to the determination of the circadian period length by antagonizing phosphorylation of CRY1 'Ser-588' and increasing CRY1 protein stability, most likely through an indirect mechanism. Plays a role in the regulation of DNA virus-mediated innate immune response by assembling into the HDP-RNP complex, a complex that serves as a platform for IRF3 phosphorylation and subsequent innate immune response activation through the cGAS-STING pathway. Also regulates the cGAS-STING pathway by catalyzing phosphorylation of CGAS, thereby impairing CGAS oligomerization and activation. Also regulates the cGAS-STING pathway by mediating phosphorylation of PARP1. This Mus musculus (Mouse) protein is DNA-dependent protein kinase catalytic subunit (Prkdc).